The sequence spans 188 residues: Auxin-induced protein 22C (188 aa).

The EAR-like (transcriptional repression) motif lies at 13 to 17 (LRLGL). The disordered stretch occupies residues 16–57 (GLPGAGGENNTDKDKNKNKKRVFSDIEGENSSSEEDGKKETK). The 89-residue stretch at 79–167 (KLYVKVSMDG…KRLRIMKRSD (89 aa)) folds into the PB1 domain.

Belongs to the Aux/IAA family. Homodimers and heterodimers.

It is found in the nucleus. Its function is as follows. Aux/IAA proteins are short-lived transcriptional factors that function as repressors of early auxin response genes at low auxin concentrations. Repression is thought to result from the interaction with auxin response factors (ARFs), proteins that bind to the auxin-responsive promoter element (AuxRE). Formation of heterodimers with ARF proteins may alter their ability to modulate early auxin response genes expression. The polypeptide is Auxin-induced protein 22C (AUX22C) (Vigna radiata var. radiata (Mung bean)).